The primary structure comprises 456 residues: Putative E3 ubiquitin-protein ligase XBAT31 (456 aa).

ANK repeat units follow at residues Asp-45–Leu-74, His-78–Met-107, Asn-112–Val-141, Lys-157–Ala-186, and Pro-194–Arg-224. The RING-type zinc finger occupies Cys-319–Arg-368.

It carries out the reaction S-ubiquitinyl-[E2 ubiquitin-conjugating enzyme]-L-cysteine + [acceptor protein]-L-lysine = [E2 ubiquitin-conjugating enzyme]-L-cysteine + N(6)-ubiquitinyl-[acceptor protein]-L-lysine.. The protein operates within protein modification; protein ubiquitination. No E3 ubiquitin-protein ligase activity observed when associated with the E2 enzyme UBC8 in vitro. This chain is Putative E3 ubiquitin-protein ligase XBAT31 (XBAT31), found in Arabidopsis thaliana (Mouse-ear cress).